The chain runs to 161 residues: Peroxynitrite isomerase 2 (161 aa).

A GXWXGXG motif is present at residues Gly17 to Gly23. Residue His152 participates in heme b binding.

Belongs to the nitrobindin family. As to quaternary structure, homodimer. Heme b serves as cofactor.

It carries out the reaction peroxynitrite = nitrate. The protein operates within nitrogen metabolism. Functionally, heme-binding protein able to scavenge peroxynitrite and to protect free L-tyrosine against peroxynitrite-mediated nitration, by acting as a peroxynitrite isomerase that converts peroxynitrite to nitrate. Therefore, this protein likely plays a role in peroxynitrite sensing and in the detoxification of reactive nitrogen and oxygen species (RNS and ROS, respectively). Is able to bind nitric oxide (NO) in vitro, but may act as a sensor of peroxynitrite levels in vivo. This chain is Peroxynitrite isomerase 2, found in Mycobacterium ulcerans (strain Agy99).